An 81-amino-acid polypeptide reads, in one-letter code: U17-lycotoxin-Ls1a (81 aa).

The signal sequence occupies residues 1–22 (MSSKVQAVLLLVGVITFLAVHA). The propeptide occupies 23–34 (QEELSENTESER). 3 disulfide bridges follow: Cys36-Cys51, Cys50-Cys67, and Cys58-Cys65.

The protein belongs to the neurotoxin 02 (plectoxin) family. As to expression, expressed by the venom gland.

The protein resides in the secreted. The protein is U17-lycotoxin-Ls1a of Lycosa singoriensis (Wolf spider).